We begin with the raw amino-acid sequence, 177 residues long: 3-isopropylmalate dehydratase small subunit 1 (177 aa).

The tract at residues 157-177 (GRFPGEEPGAEASTETASAAE) is disordered. The segment covering 162 to 177 (EEPGAEASTETASAAE) has biased composition (low complexity).

This sequence belongs to the LeuD family. LeuD type 2 subfamily. Heterodimer of LeuC and LeuD.

It catalyses the reaction (2R,3S)-3-isopropylmalate = (2S)-2-isopropylmalate. The protein operates within amino-acid biosynthesis; L-leucine biosynthesis; L-leucine from 3-methyl-2-oxobutanoate: step 2/4. Catalyzes the isomerization between 2-isopropylmalate and 3-isopropylmalate, via the formation of 2-isopropylmaleate. The chain is 3-isopropylmalate dehydratase small subunit 1 (leuD1) from Deinococcus radiodurans (strain ATCC 13939 / DSM 20539 / JCM 16871 / CCUG 27074 / LMG 4051 / NBRC 15346 / NCIMB 9279 / VKM B-1422 / R1).